The sequence spans 563 residues: CDKN2A-interacting protein (563 aa).

Position 2 is an N-acetylalanine (alanine 2). The region spanning 19-126 is the XRN2-binding (XTBD) domain; the sequence is VETLRCEGET…KVKKRGISSS (108 aa). Disordered regions lie at residues 122–289 and 304–351; these read GISS…LLGS and SSSE…PSLL. Serine 124 carries the post-translational modification Phosphoserine. Residues 147 to 160 show a composition bias toward basic and acidic residues; sequence VERDHGKKSAKTDR. 2 stretches are compositionally biased toward low complexity: residues 168–216 and 234–248; these read SSPS…SSQV and SASFVSSLLKSSMNS. Lysine 177 participates in a covalent cross-link: Glycyl lysine isopeptide (Lys-Gly) (interchain with G-Cter in SUMO1). Serine 234 carries the post-translational modification Phosphoserine. Residues 249 to 262 are compositionally biased toward polar residues; sequence HMTQSTDNRQQSGS. Residues 270–280 show a composition bias toward low complexity; sequence GSSGSASQSSS. Threonine 340 is modified (phosphothreonine). At serine 371 the chain carries Phosphoserine. The DRBM domain maps to 445–520; sequence NHGELLNAAI…SREALKLFLK (76 aa).

This sequence belongs to the CARF family. Interacts with CDKN2A/p14ARF, p53/TP53 and MDM2. Interacts with CHEK2 and MAPK3. Interacts with XRN2. In terms of processing, may be ubiquitinated.

It is found in the nucleus. Its subcellular location is the nucleoplasm. Its function is as follows. Regulates DNA damage response and cell proliferation in a dose-dependent manner through a number of signaling pathways involved in cell proliferation, apoptosis and senescence. This Mus musculus (Mouse) protein is CDKN2A-interacting protein (Cdkn2aip).